A 317-amino-acid chain; its full sequence is Dehydrogenase/reductase SDR family member 12 (317 aa).

Residues Ser50 and Ile52 each coordinate NAD(+). Ser175 lines the substrate pocket. Residues Tyr201, Lys205, and Thr234 each coordinate NAD(+). Catalysis depends on Tyr201, which acts as the Proton acceptor.

It belongs to the short-chain dehydrogenases/reductases (SDR) family.

Functionally, putative oxidoreductase. The sequence is that of Dehydrogenase/reductase SDR family member 12 (DHRS12) from Bos taurus (Bovine).